The sequence spans 220 residues: Protein GrpE (220 aa).

2 stretches are compositionally biased toward polar residues: residues 1–12 (MEQGDKQATYNE) and 50–63 (AAST…QTSV). A disordered region spans residues 1–67 (MEQGDKQATY…AEQTSVEAEE (67 aa)).

It belongs to the GrpE family. In terms of assembly, homodimer.

It localises to the cytoplasm. In terms of biological role, participates actively in the response to hyperosmotic and heat shock by preventing the aggregation of stress-denatured proteins, in association with DnaK and GrpE. It is the nucleotide exchange factor for DnaK and may function as a thermosensor. Unfolded proteins bind initially to DnaJ; upon interaction with the DnaJ-bound protein, DnaK hydrolyzes its bound ATP, resulting in the formation of a stable complex. GrpE releases ADP from DnaK; ATP binding to DnaK triggers the release of the substrate protein, thus completing the reaction cycle. Several rounds of ATP-dependent interactions between DnaJ, DnaK and GrpE are required for fully efficient folding. The sequence is that of Protein GrpE from Geobacillus thermodenitrificans (strain NG80-2).